Reading from the N-terminus, the 152-residue chain is Putative pre-16S rRNA nuclease (152 aa).

This sequence belongs to the YqgF nuclease family.

It localises to the cytoplasm. In terms of biological role, could be a nuclease involved in processing of the 5'-end of pre-16S rRNA. The polypeptide is Putative pre-16S rRNA nuclease (Sphingopyxis alaskensis (strain DSM 13593 / LMG 18877 / RB2256) (Sphingomonas alaskensis)).